Reading from the N-terminus, the 511-residue chain is GMP synthase [glutamine-hydrolyzing] (511 aa).

Positions L5–D195 constitute a Glutamine amidotransferase type-1 domain. The active-site Nucleophile is C82. Active-site residues include H169 and E171. In terms of domain architecture, GMPS ATP-PPase spans W196–R386. S223 to S229 is a binding site for ATP.

In terms of assembly, homodimer.

It carries out the reaction XMP + L-glutamine + ATP + H2O = GMP + L-glutamate + AMP + diphosphate + 2 H(+). Its pathway is purine metabolism; GMP biosynthesis; GMP from XMP (L-Gln route): step 1/1. Functionally, catalyzes the synthesis of GMP from XMP. The polypeptide is GMP synthase [glutamine-hydrolyzing] (Acetivibrio thermocellus (strain ATCC 27405 / DSM 1237 / JCM 9322 / NBRC 103400 / NCIMB 10682 / NRRL B-4536 / VPI 7372) (Clostridium thermocellum)).